Consider the following 217-residue polypeptide: Large ribosomal subunit protein uL3 (217 aa).

Positions 134 to 146 (GRATHGNSRSHNV) are enriched in polar residues. The interval 134 to 154 (GRATHGNSRSHNVPGSIGMAQ) is disordered. At Gln-154 the chain carries N5-methylglutamine.

This sequence belongs to the universal ribosomal protein uL3 family. As to quaternary structure, part of the 50S ribosomal subunit. Forms a cluster with proteins L14 and L19. In terms of processing, methylated by PrmB.

One of the primary rRNA binding proteins, it binds directly near the 3'-end of the 23S rRNA, where it nucleates assembly of the 50S subunit. The polypeptide is Large ribosomal subunit protein uL3 (Burkholderia lata (strain ATCC 17760 / DSM 23089 / LMG 22485 / NCIMB 9086 / R18194 / 383)).